A 132-amino-acid chain; its full sequence is UPF0719 inner membrane protein YjfL (132 aa).

Over 1–6 (MHILDS) the chain is Periplasmic. The helical transmembrane segment at 7–27 (LLAFSAYFFIGVAMVIIFLFI) threads the bilayer. The Cytoplasmic portion of the chain corresponds to 28-46 (YSKITPHNEWQLIKNNNTA). The helical transmembrane segment at 47–67 (ASLAFSGTLLGYVIPLSSAAI) threads the bilayer. At 68-71 (NAVS) the chain is on the periplasmic side. Residues 72–92 (IPDYFAWGGIALVIQLLVFAG) form a helical membrane-spanning segment. The Cytoplasmic segment spans residues 93-109 (VRLYMPALSEKIINHNT). The helical transmembrane segment at 110–130 (AAGMFMGTAALAGGIFNAACM) threads the bilayer. At 131–132 (TW) the chain is on the periplasmic side.

Belongs to the UPF0719 family.

The protein resides in the cell inner membrane. This chain is UPF0719 inner membrane protein YjfL (yjfL), found in Escherichia coli O157:H7.